Consider the following 422-residue polypeptide: Probable metallocarboxypeptidase A (422 aa).

The first 17 residues, 1–17 (MRSVLSLALLAANVVTA), serve as a signal peptide directing secretion. Residues 18–112 (AVVAPFDYSG…FEAYSAGYAP (95 aa)) constitute a propeptide, activation peptide. The Peptidase M14 domain maps to 119-419 (SYHSYQDHLS…AGTVAMLKAV (301 aa)). The Zn(2+) site is built by H179 and E182. Substrate-binding positions include 179 to 182 (HARE), R237, and 254 to 255 (NR). The cysteines at positions 248 and 271 are disulfide-linked. A Zn(2+)-binding site is contributed by H309. 310-311 (SY) is a binding site for substrate. The active-site Proton donor/acceptor is E385.

The protein belongs to the peptidase M14 family. The cofactor is Zn(2+).

The protein localises to the secreted. In terms of biological role, extracellular metalloprotease that contributes to pathogenicity. The sequence is that of Probable metallocarboxypeptidase A (MCPA) from Arthroderma benhamiae (strain ATCC MYA-4681 / CBS 112371) (Trichophyton mentagrophytes).